Here is a 130-residue protein sequence, read N- to C-terminus: L-aspartate semialdehyde sulfurtransferase iron-sulfur subunit (130 aa).

4Fe-4S ferredoxin-type domains follow at residues 72 to 101 (RPIH…FDET) and 102 to 130 (WSLC…KLGE). [4Fe-4S] cluster is bound by residues C81, C84, C87, C91, C111, C114, C117, and C121.

May form a complex with MA_1821. [4Fe-4S] cluster serves as cofactor.

It participates in amino-acid biosynthesis. In terms of biological role, required for O-acetylhomoserine sulfhydrylase (OAHS)-independent homocysteine (Hcy) biosynthesis. Together with MA_1821, catalyzes the condensation of sulfide with aspartate semialdehyde to generate homocysteine. May be involved in the reduction of the disulfide formed in MA_1821. This Methanosarcina acetivorans (strain ATCC 35395 / DSM 2834 / JCM 12185 / C2A) protein is L-aspartate semialdehyde sulfurtransferase iron-sulfur subunit.